The following is a 1190-amino-acid chain: Serine/threonine-protein kinase N (1190 aa).

REM-1 domains follow at residues 28–102, 142–219, and 242–322; these read NLPE…QILL, ALEG…NREQ, and SSQP…ELPA. Residues 359 to 515 form the C2 domain; it reads LGGKPYQSVS…MALQLEPQGL (157 aa). Over residues 395–404 the composition is skewed to basic and acidic residues; it reads PGRSRRDKDN. Disordered stretches follow at residues 395-415, 572-715, 757-787, and 811-832; these read PGRS…RSFV, HVHM…PPPP, PATP…QPPQ, and SPSS…RNVA. 2 stretches are compositionally biased toward low complexity: residues 576–588 and 767–787; these read GSAG…TGSS and AAAG…QPPQ. The Protein kinase domain maps to 863-1122; sequence FRLLSVLGRG…AEDVKKQAFF (260 aa). ATP is bound by residues 869–877 and Lys892; that span reads LGRGHFGKV. Catalysis depends on Asp988, which acts as the Proton acceptor. Residues 1123–1190 enclose the AGC-kinase C-terminal domain; the sequence is RSIVWDDLLL…QDFSYTAEWC (68 aa).

The protein belongs to the protein kinase superfamily. Ser/Thr protein kinase family. As to quaternary structure, interacts (via N-terminus) with Rho1 (via REM repeats), Rac1 (via REM 1 repeat) and Rac2. Phosphorylated. Autophosphorylated; autophosphorylation is stimulated by GTP-bound Rho/Rac GTPases.

The protein localises to the cytoplasm. It localises to the nucleus. Its subcellular location is the membrane. The protein resides in the cell projection. It is found in the lamellipodium. The protein localises to the cytoskeleton. It localises to the cleavage furrow. Its subcellular location is the midbody. The protein resides in the cell junction. It carries out the reaction L-seryl-[protein] + ATP = O-phospho-L-seryl-[protein] + ADP + H(+). The enzyme catalyses L-threonyl-[protein] + ATP = O-phospho-L-threonyl-[protein] + ADP + H(+). Its activity is regulated as follows. Activated by lipids, particularly cardiolipin and to a lesser extent by other acidic phospholipids and unsaturated fatty acids. Two specific sites, Thr-1022 (activation loop of the kinase domain) and Thr-1164 (turn motif), may be needed to be phosphorylated for its full activation. Kinase activity is activated upon binding to GTP-bound Rho/Rac GTPases. Its function is as follows. Pkc-related serine/threonine-protein kinase and Rho/Rac effector protein that participates in specific signal transduction responses in the cell. May play a role in the regulation of cell cycle progression, actin cytoskeleton assembly, cell migration, cell adhesion and transcription activation signaling processes. Plays a role in regulating Rho-mediated dorsal closure during embryogenesis. This is Serine/threonine-protein kinase N (Pkn) from Drosophila melanogaster (Fruit fly).